A 139-amino-acid polypeptide reads, in one-letter code: uncharacterized protein (139 aa).

This is an uncharacterized protein from Ostreid herpesvirus 1 (isolate France) (OsHV-1).